The following is a 210-amino-acid chain: Pyridoxine/pyridoxamine 5'-phosphate oxidase (210 aa).

Residues arginine 7 to tyrosine 10 and lysine 65 each bind substrate. FMN-binding positions include arginine 60 to lysine 65, phenylalanine 75 to threonine 76, arginine 81, lysine 82, and glutamine 104. Residues tyrosine 122, arginine 126, and serine 130 each contribute to the substrate site. Residues glutamine 139–serine 140 and tryptophan 183 contribute to the FMN site. Arginine 189–histidine 191 contributes to the substrate binding site. Residue arginine 193 coordinates FMN.

This sequence belongs to the pyridoxamine 5'-phosphate oxidase family. As to quaternary structure, homodimer. It depends on FMN as a cofactor.

It catalyses the reaction pyridoxamine 5'-phosphate + O2 + H2O = pyridoxal 5'-phosphate + H2O2 + NH4(+). The enzyme catalyses pyridoxine 5'-phosphate + O2 = pyridoxal 5'-phosphate + H2O2. The protein operates within cofactor metabolism; pyridoxal 5'-phosphate salvage; pyridoxal 5'-phosphate from pyridoxamine 5'-phosphate: step 1/1. It functions in the pathway cofactor metabolism; pyridoxal 5'-phosphate salvage; pyridoxal 5'-phosphate from pyridoxine 5'-phosphate: step 1/1. In terms of biological role, catalyzes the oxidation of either pyridoxine 5'-phosphate (PNP) or pyridoxamine 5'-phosphate (PMP) into pyridoxal 5'-phosphate (PLP). In Neisseria gonorrhoeae (strain ATCC 700825 / FA 1090), this protein is Pyridoxine/pyridoxamine 5'-phosphate oxidase.